The primary structure comprises 59 residues: Photosystem II reaction center protein K (59 aa).

Positions 1-22 (MLNIFSLICLSSALHSSSFFFA) are excised as a propeptide. Residues 38-58 (MPVIPVLFFLLALVWQAAVSF) traverse the membrane as a helical segment.

This sequence belongs to the PsbK family. In terms of assembly, PSII is composed of 1 copy each of membrane proteins PsbA, PsbB, PsbC, PsbD, PsbE, PsbF, PsbH, PsbI, PsbJ, PsbK, PsbL, PsbM, PsbT, PsbX, PsbY, PsbZ, Psb30/Ycf12, at least 3 peripheral proteins of the oxygen-evolving complex and a large number of cofactors. It forms dimeric complexes.

Its subcellular location is the plastid. The protein resides in the chloroplast thylakoid membrane. Functionally, one of the components of the core complex of photosystem II (PSII). PSII is a light-driven water:plastoquinone oxidoreductase that uses light energy to abstract electrons from H(2)O, generating O(2) and a proton gradient subsequently used for ATP formation. It consists of a core antenna complex that captures photons, and an electron transfer chain that converts photonic excitation into a charge separation. In Piper cenocladum (Ant piper), this protein is Photosystem II reaction center protein K.